Reading from the N-terminus, the 415-residue chain is Imidazolonepropionase (415 aa).

Fe(3+)-binding residues include histidine 74 and histidine 76. Positions 74 and 76 each coordinate Zn(2+). The 4-imidazolone-5-propanoate site is built by arginine 83, tyrosine 146, and histidine 179. Tyrosine 146 lines the N-formimidoyl-L-glutamate pocket. Histidine 244 lines the Fe(3+) pocket. Histidine 244 provides a ligand contact to Zn(2+). Residue glutamine 247 participates in 4-imidazolone-5-propanoate binding. Aspartate 319 lines the Fe(3+) pocket. Aspartate 319 contacts Zn(2+). Asparagine 321 and glycine 323 together coordinate N-formimidoyl-L-glutamate. Threonine 324 contacts 4-imidazolone-5-propanoate.

It belongs to the metallo-dependent hydrolases superfamily. HutI family. Requires Zn(2+) as cofactor. It depends on Fe(3+) as a cofactor.

The protein resides in the cytoplasm. It catalyses the reaction 4-imidazolone-5-propanoate + H2O = N-formimidoyl-L-glutamate. The protein operates within amino-acid degradation; L-histidine degradation into L-glutamate; N-formimidoyl-L-glutamate from L-histidine: step 3/3. Functionally, catalyzes the hydrolytic cleavage of the carbon-nitrogen bond in imidazolone-5-propanoate to yield N-formimidoyl-L-glutamate. It is the third step in the universal histidine degradation pathway. The sequence is that of Imidazolonepropionase from Cupriavidus metallidurans (strain ATCC 43123 / DSM 2839 / NBRC 102507 / CH34) (Ralstonia metallidurans).